Consider the following 109-residue polypeptide: Small ribosomal subunit protein eS25z (109 aa).

Positions Met-1–Lys-36 are disordered. Basic residues predominate over residues Lys-22–Gly-31.

This sequence belongs to the eukaryotic ribosomal protein eS25 family.

The chain is Small ribosomal subunit protein eS25z (RPS25A) from Arabidopsis thaliana (Mouse-ear cress).